A 42-amino-acid chain; its full sequence is Photosystem I reaction center subunit IX (42 aa).

A helical membrane pass occupies residues 7–27; sequence YLSTAPVLATLWFGFLAGLLI.

Belongs to the PsaJ family.

Its subcellular location is the plastid. It is found in the chloroplast thylakoid membrane. Its function is as follows. May help in the organization of the PsaE and PsaF subunits. This Huperzia lucidula (Shining clubmoss) protein is Photosystem I reaction center subunit IX.